A 268-amino-acid chain; its full sequence is Hydroxyethylthiazole kinase (268 aa).

Met47 is a binding site for substrate. ATP-binding residues include Arg122 and Thr168. Residue Ala195 participates in substrate binding.

It belongs to the Thz kinase family. It depends on Mg(2+) as a cofactor.

The catalysed reaction is 5-(2-hydroxyethyl)-4-methylthiazole + ATP = 4-methyl-5-(2-phosphooxyethyl)-thiazole + ADP + H(+). It functions in the pathway cofactor biosynthesis; thiamine diphosphate biosynthesis; 4-methyl-5-(2-phosphoethyl)-thiazole from 5-(2-hydroxyethyl)-4-methylthiazole: step 1/1. Its function is as follows. Catalyzes the phosphorylation of the hydroxyl group of 4-methyl-5-beta-hydroxyethylthiazole (THZ). This is Hydroxyethylthiazole kinase from Rhizobium rhizogenes (strain K84 / ATCC BAA-868) (Agrobacterium radiobacter).